Reading from the N-terminus, the 229-residue chain is Triosephosphate isomerase (229 aa).

Substrate is bound at residue 6-8; it reads NFK. Residue His-88 is the Electrophile of the active site. The Proton acceptor role is filled by Glu-157. Residues Gly-163 and Ser-193 each contribute to the substrate site.

The protein belongs to the triosephosphate isomerase family. Homodimer.

It is found in the cytoplasm. The catalysed reaction is D-glyceraldehyde 3-phosphate = dihydroxyacetone phosphate. Its pathway is carbohydrate biosynthesis; gluconeogenesis. The protein operates within carbohydrate degradation; glycolysis; D-glyceraldehyde 3-phosphate from glycerone phosphate: step 1/1. In terms of biological role, involved in the gluconeogenesis. Catalyzes stereospecifically the conversion of dihydroxyacetone phosphate (DHAP) to D-glyceraldehyde-3-phosphate (G3P). The sequence is that of Triosephosphate isomerase from Sulfurovum sp. (strain NBC37-1).